Consider the following 112-residue polypeptide: uncharacterized protein (112 aa).

2 consecutive transmembrane segments (helical) span residues 7–26 (PSFHFFIFFFLFCLLRTLDY) and 36–58 (TYMHIKLFFSYYFRFVHLFFFLY).

It localises to the membrane. This is an uncharacterized protein from Saccharomyces cerevisiae (strain ATCC 204508 / S288c) (Baker's yeast).